A 103-amino-acid chain; its full sequence is MSANVTLLLIFVTLASVTAQTFQYSRGWTNGKRDQGHLRPELKELINNMDKILSPCQKNKLKYLLEGKPVTERLLIPCDILDTEEYPRALTERNLNAMMDAFY.

The signal sequence occupies residues 1–19 (MSANVTLLLIFVTLASVTA). At Gln20 the chain carries Pyrrolidone carboxylic acid. Asparagine amide is present on Asn30. The propeptide occupies 34 to 103 (DQGHLRPELK…NLNAMMDAFY (70 aa)).

As to expression, expressed in corpora cardiaca (CC), corpora allata (CA), antennal lobe (AL) and gnathal ganglion (GNG) (at protein level). Expression in CC and CA detected in all animals, expression in AL and in GNG in some animals.

The protein localises to the secreted. Functionally, cardioactive peptide. Corazonin is probably involved in the physiological regulation of the heart beat. This Agrotis ipsilon (Black cutworm moth) protein is Pro-corazonin.